The primary structure comprises 195 residues: MTPILLSAFWTYTLITAMTPGPNNILALSSATSHGFRQSTRVLAGMSLGFLIVMLLCAGISFSLAVIDPAAVHLLSWAGAAYIVWLAWKIATSPTKEDGLQAKPISFWASFALQFVNVKIILYGVTALSTFVLPQTQALSWVVGVSVLLAMIGTFGNVCWALAGHLFQRLFRQYGRQLNIVLALLLVYCAVRIFY.

At 1–9 the chain is on the periplasmic side; it reads MTPILLSAF. A helical membrane pass occupies residues 10-32; sequence WTYTLITAMTPGPNNILALSSAT. Residues 33 to 46 are Cytoplasmic-facing; it reads SHGFRQSTRVLAGM. Residues 47 to 67 traverse the membrane as a helical segment; sequence SLGFLIVMLLCAGISFSLAVI. The Periplasmic segment spans residues 68–69; sequence DP. A helical transmembrane segment spans residues 70-90; sequence AAVHLLSWAGAAYIVWLAWKI. Residues 91 to 104 lie on the Cytoplasmic side of the membrane; sequence ATSPTKEDGLQAKP. The chain crosses the membrane as a helical span at residues 105-125; it reads ISFWASFALQFVNVKIILYGV. Residues 126 to 141 lie on the Periplasmic side of the membrane; sequence TALSTFVLPQTQALSW. Residues 142–162 form a helical membrane-spanning segment; sequence VVGVSVLLAMIGTFGNVCWAL. Over 163–176 the chain is Cytoplasmic; sequence AGHLFQRLFRQYGR. The helical transmembrane segment at 177-194 threads the bilayer; sequence QLNIVLALLLVYCAVRIF. A topological domain (periplasmic) is located at residue Y195.

The protein belongs to the Rht family.

The protein resides in the cell inner membrane. It carries out the reaction O-acetyl-L-serine(in) = O-acetyl-L-serine(out). The enzyme catalyses L-cysteine(in) = L-cysteine(out). Functionally, exporter of O-acetylserine (OAS) and cysteine. The sequence is that of Cysteine/O-acetylserine efflux protein (eamB) from Shigella flexneri serotype 5b (strain 8401).